The following is a 300-amino-acid chain: NAD kinase (300 aa).

Residue Asp75 is the Proton acceptor of the active site. NAD(+) contacts are provided by residues 75-76, 149-150, Arg177, Asp179, 190-195, Ala214, and Gln248; these read DG, ND, and TAYALS.

The protein belongs to the NAD kinase family. Requires a divalent metal cation as cofactor.

It is found in the cytoplasm. The catalysed reaction is NAD(+) + ATP = ADP + NADP(+) + H(+). Involved in the regulation of the intracellular balance of NAD and NADP, and is a key enzyme in the biosynthesis of NADP. Catalyzes specifically the phosphorylation on 2'-hydroxyl of the adenosine moiety of NAD to yield NADP. The sequence is that of NAD kinase from Paraburkholderia phymatum (strain DSM 17167 / CIP 108236 / LMG 21445 / STM815) (Burkholderia phymatum).